We begin with the raw amino-acid sequence, 259 residues long: Deoxyribose-phosphate aldolase (259 aa).

Catalysis depends on D102, which acts as the Proton donor/acceptor. Catalysis depends on K167, which acts as the Schiff-base intermediate with acetaldehyde. K201 (proton donor/acceptor) is an active-site residue.

This sequence belongs to the DeoC/FbaB aldolase family. DeoC type 2 subfamily.

Its subcellular location is the cytoplasm. It carries out the reaction 2-deoxy-D-ribose 5-phosphate = D-glyceraldehyde 3-phosphate + acetaldehyde. Its pathway is carbohydrate degradation; 2-deoxy-D-ribose 1-phosphate degradation; D-glyceraldehyde 3-phosphate and acetaldehyde from 2-deoxy-alpha-D-ribose 1-phosphate: step 2/2. Functionally, catalyzes a reversible aldol reaction between acetaldehyde and D-glyceraldehyde 3-phosphate to generate 2-deoxy-D-ribose 5-phosphate. In Shigella flexneri, this protein is Deoxyribose-phosphate aldolase.